A 172-amino-acid chain; its full sequence is MDRAEKKESVAALADVFQKTSVVVVAHYSGLTVAQMQNLRKQMRASGATVQVAKNRLVKIALDGTPVSSISPLLKGPTLIAYSDDPVAAPKVAVGFAKDHDKFVILGGAMGTTALNVDGVRSLATMPSLDELRGKLVGLIQAPATKLAQLTTAPAAKLARVFGAYAAKDDAA.

It belongs to the universal ribosomal protein uL10 family. As to quaternary structure, part of the ribosomal stalk of the 50S ribosomal subunit. The N-terminus interacts with L11 and the large rRNA to form the base of the stalk. The C-terminus forms an elongated spine to which L12 dimers bind in a sequential fashion forming a multimeric L10(L12)X complex.

Forms part of the ribosomal stalk, playing a central role in the interaction of the ribosome with GTP-bound translation factors. The protein is Large ribosomal subunit protein uL10 of Beijerinckia indica subsp. indica (strain ATCC 9039 / DSM 1715 / NCIMB 8712).